The primary structure comprises 292 residues: uncharacterized protein (292 aa).

Catalysis depends on charge relay system residues T43 and Y105. Y131 serves as the catalytic Proton donor. K159 acts as the Schiff-base intermediate with substrate in catalysis.

The protein belongs to the DapA family. As to quaternary structure, homotetramer.

It is found in the cytoplasm. This is an uncharacterized protein from Thermococcus kodakarensis (strain ATCC BAA-918 / JCM 12380 / KOD1) (Pyrococcus kodakaraensis (strain KOD1)).